Consider the following 98-residue polypeptide: Large ribosomal subunit protein bL28 (98 aa).

The protein belongs to the bacterial ribosomal protein bL28 family.

The polypeptide is Large ribosomal subunit protein bL28 (Mesorhizobium japonicum (strain LMG 29417 / CECT 9101 / MAFF 303099) (Mesorhizobium loti (strain MAFF 303099))).